A 449-amino-acid polypeptide reads, in one-letter code: Phosphoglucosamine mutase (449 aa).

S105 (phosphoserine intermediate) is an active-site residue. Residues S105, D242, D244, and D246 each contribute to the Mg(2+) site. At S105 the chain carries Phosphoserine.

The protein belongs to the phosphohexose mutase family. Mg(2+) is required as a cofactor. In terms of processing, activated by phosphorylation.

The catalysed reaction is alpha-D-glucosamine 1-phosphate = D-glucosamine 6-phosphate. Catalyzes the conversion of glucosamine-6-phosphate to glucosamine-1-phosphate. In Clavibacter sepedonicus (Clavibacter michiganensis subsp. sepedonicus), this protein is Phosphoglucosamine mutase.